A 196-amino-acid polypeptide reads, in one-letter code: MPKVQSNKSKQEKVIHPYSRKAAQLTREAHKQDRKDRLKSEKALRLSIIGEKLQWFQSHLNPEKAEYTKKEACELIESYLHRFDNELEQIELHNSIKGRQTRRHESRETVIKQTIERERQLYNGYGIEIPDIVNSRNLKVFRDWDLDMKKLPNIKMRKISISDSLSKSDKDVPGSNDEIENELGSNEESMPDFQES.

2 disordered regions span residues M1 to R37 and S162 to S196. Residues R27 to R37 are compositionally biased toward basic and acidic residues.

It belongs to the TMA16 family. As to quaternary structure, associates with pre-60S ribosomal particles.

It is found in the nucleus. In terms of biological role, involved in the biogenesis of the 60S ribosomal subunit in the nucleus. This chain is Translation machinery-associated protein 16 (tma16), found in Xenopus laevis (African clawed frog).